A 344-amino-acid polypeptide reads, in one-letter code: tRNA(Ile)-lysidine synthase (344 aa).

An ATP-binding site is contributed by 43-48; sequence SGGADS.

This sequence belongs to the tRNA(Ile)-lysidine synthase family.

Its subcellular location is the cytoplasm. The catalysed reaction is cytidine(34) in tRNA(Ile2) + L-lysine + ATP = lysidine(34) in tRNA(Ile2) + AMP + diphosphate + H(+). In terms of biological role, ligates lysine onto the cytidine present at position 34 of the AUA codon-specific tRNA(Ile) that contains the anticodon CAU, in an ATP-dependent manner. Cytidine is converted to lysidine, thus changing the amino acid specificity of the tRNA from methionine to isoleucine. The sequence is that of tRNA(Ile)-lysidine synthase from Bordetella bronchiseptica (strain ATCC BAA-588 / NCTC 13252 / RB50) (Alcaligenes bronchisepticus).